A 193-amino-acid chain; its full sequence is CASP-like protein 1D2 (193 aa).

Residues 1 to 30 are Cytoplasmic-facing; that stretch reads MASTDKPGGDPEYRTSSTPAPAGVDYFKFD. Residues 31–51 traverse the membrane as a helical segment; the sequence is VILRFLLFAASLVAVVVIVTA. Asn-52 carries N-linked (GlcNAc...) asparagine glycosylation. At 52-73 the chain is on the extracellular side; that stretch reads NQTEVIRVPQPVPWPAKFRYSP. A helical membrane pass occupies residues 74-94; it reads AFVYFVAALSVTGLYSIITTL. The Cytoplasmic portion of the chain corresponds to 95-108; sequence ASLLASNKPALKTK. A helical transmembrane segment spans residues 109 to 129; it reads LLLYFILWDALILGIIASATG. At 130-161 the chain is on the extracellular side; the sequence is TAGGVAYLGLKGNRHVVGWNKICHVYDKFCRH. The chain crosses the membrane as a helical span at residues 162–182; it reads VGASIAVALFGSVVTVLLIWL. Residues 183–193 are Cytoplasmic-facing; it reads SAYSIHSRVPK.

The protein belongs to the Casparian strip membrane proteins (CASP) family. As to quaternary structure, homodimer and heterodimers.

It localises to the cell membrane. This is CASP-like protein 1D2 from Glycine max (Soybean).